We begin with the raw amino-acid sequence, 285 residues long: MEDYILKVEELNYNYSDGTHALKGINMNIKRGEVTAILGGNGVGKSTLFQNFNGILKPSSGRILFDNKPIDYSRKGIMKLRESIGIVFQDPDNQLFSASVYQDVSFGAVNMKLSEDEIRKRVDNALKRTSIEHLKNKPTHCLSFGQKKRVAIAGVLVMEPKVLILDEPTAGLDPMGVSEIMKLLVEMQKELGITIIIATHDIDIVPLYCDNVFVMKEGRVILQGNPKEVFAEKEVIRKVNLRLPRIGHLMEILKEKDGFVFDELDLTIGQARKTINSWKNKIFND.

An ABC transporter domain is found at 6–242 (LKVEELNYNY…KEVIRKVNLR (237 aa)). 39-46 (GGNGVGKS) provides a ligand contact to ATP.

This sequence belongs to the ABC transporter superfamily.

It localises to the cell membrane. Functionally, probably part of an ABC transporter complex. Responsible for energy coupling to the transport system. The protein is Putative ABC transporter ATP-binding protein CPE0195 of Clostridium perfringens (strain 13 / Type A).